The primary structure comprises 736 residues: Segment polarity protein dishevelled homolog DVL-2 (736 aa).

In terms of domain architecture, DIX spans 1 to 82; that stretch reads MAETKVIYHL…RVVSWLASSE (82 aa). The disordered stretch occupies residues 79-241; it reads ASSEGSQPDS…PRLERTSSFS (163 aa). Over residues 100 to 114 the composition is skewed to pro residues; sequence EPPPPVPPPIPPPPA. A compositionally biased stretch (basic and acidic residues) spans 149–160; that stretch reads MRRDRVRRRESS. Residues 181-195 are compositionally biased toward low complexity; sequence ESSSTLLTSEIETSI. Over residues 205–217 the composition is skewed to polar residues; it reads SRFSSSTEQSSAS. Positions 219-231 are enriched in basic residues; it reads LLKRHRRRRKQRP. The region spanning 254–326 is the PDZ domain; that stretch reads TVTLNMEKYN…NDDAVRVLRD (73 aa). Residues 327-427 form an interaction with custos region; that stretch reads IVHKPGPIVL…LASVVKVMAS (101 aa). The region spanning 428 to 502 is the DEP domain; that stretch reads PESGLEVRDR…SEQCYYIFGD (75 aa). Low complexity-rich tracts occupy residues 574–593 and 616–629; these read MGSA…SNRS and KSGS…STRS. The interval 574 to 664 is disordered; it reads MGSAGSQHSE…HPPSVHSYAA (91 aa).

The protein belongs to the DSH family. In terms of assembly, can form homomultimers. Interacts with prickle1. Interacts (via PDZ domain) with ccdc88c/dal and dact1-B/dpr. Interacts (via DIX domain) with ARP/Axin-related protein and dact1-A/frodo. Interacts with sdc4, possibly via fz7. Interacts directly (via DEP domain) with efnb1/ephrin-B1 and indirectly with the phosphorylated ephrin receptors ephb1 and ephb2, via association with SH domain-containing adapters. May interact with lrrc6. Interacts with custos (via NLS1 and NLS2); the interaction is negatively regulated by Wnt stimulation. Phosphorylated. Phosphorylation is controlled by frizzled proteins, correlates with the onset of embryo dorsalizing events and is higher in the dorsal half of early cleavage embryos. Phosphorylated on tyrosine residues in response to association with efnb1/ephrin-B1. Expressed equally in both animal-vegetal and dorsal-ventral directions of the early blastula. Becomes enriched on the dorsal side of the embryo after cortical rotation. Expressed along the anterior margin of eye field of neurulae (stage 16 embryos) and in the anterolateral crescent that borders the eye field. Continues to be expressed in the optic cup at stage 26. Expressed in the central nervous system throughout the early tailbud stage including the entire hindbrain.

The protein localises to the cytoplasm. The protein resides in the cytoplasmic vesicle. Its subcellular location is the cell projection. It is found in the cilium. It localises to the nucleus. The protein localises to the cell membrane. Involved in at least 2 independent signaling cascades, controlling cell fate via canonical Wnt signaling and cell polarity via a planar cell polarity (PCP) cascade. Acts synergistically with dal/dapple-like to activate Wnt signaling, stabilizing ctnnb1/beta-catenin and leading to dorsal axis formation. Also prevents degradation of ctnnb1/beta-catenin by displacing gsk3 from a complex with ARP/Axin-related protein. Has an additional role in anterior-posterior (A/P) axis formation, specifying different neuroectodermal cell fates along the A/P axis in a dose-dependent manner by activating several early patterning genes. In the PCP pathway, required at the cell membrane for PCP-mediated neural and mesodermal convergent extension during gastrulation and subsequent neural tube closure, acting to activate jnk. Also involved in blastopore closure and archenteron elongation during early, but not late, gastrulation. Associates with ephrin receptors and ligands and acts as part of a downstream PCP pathway to mediate ephrin-mediated cell repulsion via activation of rhoa. Required for efnb1/ephrin-B1-driven movement of non-retinal progenitor cells into the retina during eye field formation. Patterns the hindbrain. Required for ciliogenesis. Controls the docking of basal bodies to the apical plasma membrane; mediates the activation, but not localization of rhoa at the apical surface of ciliated cells during basal body docking. Furthermore, required for the association of basal bodies with membrane-bound vesicles and the vesicle-trafficking protein exoc4/sec8, and this association is in turn required for basal body docking. Once basal bodies are docked, required for the planar polarization of basal bodies that underlies ciliary beating and the directional fluid flow across ciliated epithelia. This chain is Segment polarity protein dishevelled homolog DVL-2 (dvl2), found in Xenopus laevis (African clawed frog).